The chain runs to 136 residues: Nucleoside diphosphate kinase (136 aa).

ATP contacts are provided by lysine 10, phenylalanine 58, arginine 86, threonine 92, arginine 104, and asparagine 114. Catalysis depends on histidine 117, which acts as the Pros-phosphohistidine intermediate.

The protein belongs to the NDK family. As to quaternary structure, homohexamer. The cofactor is Mg(2+).

The protein resides in the cytoplasm. The catalysed reaction is a 2'-deoxyribonucleoside 5'-diphosphate + ATP = a 2'-deoxyribonucleoside 5'-triphosphate + ADP. It carries out the reaction a ribonucleoside 5'-diphosphate + ATP = a ribonucleoside 5'-triphosphate + ADP. Major role in the synthesis of nucleoside triphosphates other than ATP. The ATP gamma phosphate is transferred to the NDP beta phosphate via a ping-pong mechanism, using a phosphorylated active-site intermediate. This chain is Nucleoside diphosphate kinase, found in Mycobacterium bovis (strain ATCC BAA-935 / AF2122/97).